A 401-amino-acid chain; its full sequence is Enoyl-[acyl-carrier-protein] reductase [NADH] (401 aa).

Residues 48–53 (GASSGY), 74–75 (FE), 111–112 (DA), and 140–141 (LA) each bind NAD(+). Substrate is bound at residue Y226. Y236 (proton donor) is an active-site residue. NAD(+) is bound by residues K245 and 274–276 (VVT).

It belongs to the TER reductase family. As to quaternary structure, monomer.

The enzyme catalyses a 2,3-saturated acyl-[ACP] + NAD(+) = a (2E)-enoyl-[ACP] + NADH + H(+). Its pathway is lipid metabolism; fatty acid biosynthesis. In terms of biological role, involved in the final reduction of the elongation cycle of fatty acid synthesis (FAS II). Catalyzes the reduction of a carbon-carbon double bond in an enoyl moiety that is covalently linked to an acyl carrier protein (ACP). The chain is Enoyl-[acyl-carrier-protein] reductase [NADH] from Xylella fastidiosa (strain Temecula1 / ATCC 700964).